A 530-amino-acid polypeptide reads, in one-letter code: Testis-expressed protein 44 (530 aa).

Residues M1–E10 are compositionally biased toward acidic residues. Disordered stretches follow at residues M1–T85, A207–L233, E256–L290, and Q305–F384. 3 stretches are compositionally biased toward polar residues: residues A11–N26, G222–L233, and N257–N280. Over residues P365 to S381 the composition is skewed to pro residues. Phosphoserine is present on S468.

It localises to the cytoplasm. The protein is Testis-expressed protein 44 (Tex44) of Mus musculus (Mouse).